Here is a 685-residue protein sequence, read N- to C-terminus: DNA ligase (685 aa).

Residues 39–43, 88–89, and Glu119 each bind NAD(+); these read DGEYD and SL. Lys121 functions as the N6-AMP-lysine intermediate in the catalytic mechanism. The NAD(+) site is built by Arg142, Glu182, Lys302, and Lys326. Positions 420, 423, 438, and 443 each coordinate Zn(2+). Residues 606 to 685 enclose the BRCT domain; sequence DNATFFSEKR…QTFLEHLDRG (80 aa).

This sequence belongs to the NAD-dependent DNA ligase family. LigA subfamily. Mg(2+) serves as cofactor. The cofactor is Mn(2+).

The catalysed reaction is NAD(+) + (deoxyribonucleotide)n-3'-hydroxyl + 5'-phospho-(deoxyribonucleotide)m = (deoxyribonucleotide)n+m + AMP + beta-nicotinamide D-nucleotide.. Functionally, DNA ligase that catalyzes the formation of phosphodiester linkages between 5'-phosphoryl and 3'-hydroxyl groups in double-stranded DNA using NAD as a coenzyme and as the energy source for the reaction. It is essential for DNA replication and repair of damaged DNA. The sequence is that of DNA ligase from Desulforapulum autotrophicum (strain ATCC 43914 / DSM 3382 / VKM B-1955 / HRM2) (Desulfobacterium autotrophicum).